The following is a 193-amino-acid chain: Ribosomal RNA small subunit methyltransferase G (193 aa).

Residues Gly-72, Phe-77, 123 to 124, and Arg-137 contribute to the S-adenosyl-L-methionine site; that span reads IE.

The protein belongs to the methyltransferase superfamily. RNA methyltransferase RsmG family.

It localises to the cytoplasm. It carries out the reaction guanosine(527) in 16S rRNA + S-adenosyl-L-methionine = N(7)-methylguanosine(527) in 16S rRNA + S-adenosyl-L-homocysteine. Its function is as follows. Specifically methylates the N7 position of guanine in position 527 of 16S rRNA. The chain is Ribosomal RNA small subunit methyltransferase G from Wolinella succinogenes (strain ATCC 29543 / DSM 1740 / CCUG 13145 / JCM 31913 / LMG 7466 / NCTC 11488 / FDC 602W) (Vibrio succinogenes).